The chain runs to 212 residues: Deoxyribose-phosphate aldolase (212 aa).

Asp-89 acts as the Proton donor/acceptor in catalysis. The active-site Schiff-base intermediate with acetaldehyde is the Lys-151. Residue Lys-180 is the Proton donor/acceptor of the active site.

It belongs to the DeoC/FbaB aldolase family. DeoC type 1 subfamily.

It is found in the cytoplasm. It catalyses the reaction 2-deoxy-D-ribose 5-phosphate = D-glyceraldehyde 3-phosphate + acetaldehyde. The protein operates within carbohydrate degradation; 2-deoxy-D-ribose 1-phosphate degradation; D-glyceraldehyde 3-phosphate and acetaldehyde from 2-deoxy-alpha-D-ribose 1-phosphate: step 2/2. Catalyzes a reversible aldol reaction between acetaldehyde and D-glyceraldehyde 3-phosphate to generate 2-deoxy-D-ribose 5-phosphate. This is Deoxyribose-phosphate aldolase from Clostridium botulinum (strain 657 / Type Ba4).